Here is a 429-residue protein sequence, read N- to C-terminus: DNA polymerase delta small subunit (429 aa).

Belongs to the DNA polymerase delta/II small subunit family. As to quaternary structure, heterodimer with subunits of 125 kDa and 50 kDa.

Its subcellular location is the nucleus. The enzyme catalyses DNA(n) + a 2'-deoxyribonucleoside 5'-triphosphate = DNA(n+1) + diphosphate. In terms of biological role, the function of the small subunit is not yet clear. The polypeptide is DNA polymerase delta small subunit (POLD2) (Oryza sativa subsp. japonica (Rice)).